The sequence spans 1373 residues: DNA-directed RNA polymerase subunit beta'' (1373 aa).

Zn(2+) contacts are provided by C224, C296, C303, and C306.

It belongs to the RNA polymerase beta' chain family. RpoC2 subfamily. In terms of assembly, in plastids the minimal PEP RNA polymerase catalytic core is composed of four subunits: alpha, beta, beta', and beta''. When a (nuclear-encoded) sigma factor is associated with the core the holoenzyme is formed, which can initiate transcription. Zn(2+) is required as a cofactor.

The protein localises to the plastid. The protein resides in the chloroplast. It catalyses the reaction RNA(n) + a ribonucleoside 5'-triphosphate = RNA(n+1) + diphosphate. In terms of biological role, DNA-dependent RNA polymerase catalyzes the transcription of DNA into RNA using the four ribonucleoside triphosphates as substrates. In Amborella trichopoda, this protein is DNA-directed RNA polymerase subunit beta''.